Consider the following 774-residue polypeptide: MASVENRTPNVSVFLCFFVLFATLLLSGGRVSSQTSAVFACDVAKNPALANYGFCNKKLSVDARVKDLVRRLTLQEKVGNLVNSAVDVSRLGIPKYEWWSEALHGVSNIGPGTHFSNVIPGATSFPMPILIAASFNASLFQTIGKVVSTEARAMHNVGLAGLTYWSPNINIFRDPRWGRGQETPGEDPLLASKYAAGYVKGLQQTDDGDSNKLKVAACCKHYTAYDVDDWKGVQRYTFNAVVTQQDLDDTYQPPFKSCVIDGNVASVMCSYNQVNGKPTCADPDLLKGVIRGKWKLNGYIVSDCDSVDVLFKNQHYTKTPEEAAAKSILAGLDLNCGSFLGRYTEGAVKQGLIGEASINNAVYNNFATLMRLGFFDGDPSKQPYGNLGPKDVCTSANQELAREAARQGIVLLKNCAGSLPLNAKAIKSLAVIGPNANATRAMIGNYEGIPCKYTSPLQGLTALVPTSFAAGCPDVQCTNAALDDAKKIAASADATVIVVGANLAIEAESHDRINILLPGQQQQLVTEVANVAKGPVILAIMSGGGMDVSFAKTNKKITSILWVGYPGEAGGAAIADVIFGYHNPSGRLPMTWYPQSYVDKVPMTNMNMRPDPATGYPGRTYRFYKGETVFSFGDGISYSTFEHKLVKAPQLVSVPLAEDHVCRSSKCKSLDVVGEHCQNLAFDIHLRIKNKGKMSSSQTVFLFSTPPAVHNAPQKHLLAFEKVLLTGKSEALVSFKVDVCKDLGLVDELGNRKVALGKHMLHVGDLKHPLSVMI.

An N-terminal signal peptide occupies residues 1 to 33; the sequence is MASVENRTPNVSVFLCFFVLFATLLLSGGRVSS. N136 carries an N-linked (GlcNAc...) asparagine glycan. The active site involves D303. N-linked (GlcNAc...) asparagine glycosylation is present at N437.

Belongs to the glycoside hydrolase 3 family.

Its subcellular location is the secreted. The protein resides in the extracellular space. The protein localises to the extracellular matrix. It catalyses the reaction Hydrolysis of (1-&gt;4)-beta-D-xylans, to remove successive D-xylose residues from the non-reducing termini.. The catalysed reaction is Hydrolysis of terminal non-reducing alpha-L-arabinofuranoside residues in alpha-L-arabinosides.. A bifunctional beta-xylosidase/alpha-L-arabinosidase, exo-enzyme that acts synergistically with endohydrolases. Releases xylose and arabinose from cell walls. In Medicago sativa subsp. varia (Alfalfa), this protein is Beta-xylosidase/alpha-L-arabinofuranosidase 2.